We begin with the raw amino-acid sequence, 499 residues long: Probable malate:quinone oxidoreductase 4 (499 aa).

This sequence belongs to the MQO family. It depends on FAD as a cofactor.

The catalysed reaction is (S)-malate + a quinone = a quinol + oxaloacetate. It functions in the pathway carbohydrate metabolism; tricarboxylic acid cycle; oxaloacetate from (S)-malate (quinone route): step 1/1. The polypeptide is Probable malate:quinone oxidoreductase 4 (Staphylococcus epidermidis (strain ATCC 35984 / DSM 28319 / BCRC 17069 / CCUG 31568 / BM 3577 / RP62A)).